We begin with the raw amino-acid sequence, 221 residues long: Guanylate kinase (221 aa).

Residues 20 to 199 form the Guanylate kinase-like domain; the sequence is GLMFILSSPS…CFGKVREILA (180 aa). ATP is bound at residue 27 to 34; it reads SPSGAGKT.

The protein belongs to the guanylate kinase family.

The protein localises to the cytoplasm. The catalysed reaction is GMP + ATP = GDP + ADP. Its function is as follows. Essential for recycling GMP and indirectly, cGMP. In Novosphingobium aromaticivorans (strain ATCC 700278 / DSM 12444 / CCUG 56034 / CIP 105152 / NBRC 16084 / F199), this protein is Guanylate kinase.